Consider the following 299-residue polypeptide: Putative ankyrin repeat protein R864 (299 aa).

ANK repeat units lie at residues 78-107 (SLNK…NIES), 108-137 (NNNY…NIKS), 139-167 (NNRV…DIRS), 168-197 (NDDY…DIRS), 199-227 (YYYI…DIRA), 228-257 (YNNC…DIRN), and 258-287 (DNDY…DIKT).

In Acanthamoeba polyphaga mimivirus (APMV), this protein is Putative ankyrin repeat protein R864.